The primary structure comprises 466 residues: MQQHFHFDAIVIGSGPGGEGAAMGLVKQGARVAVIERYNNVGGGCTHWGTIPSKALRHAVSRIIEFNQNPLYSDNARTIKSSFADILNHADRVINQQTRMRQGFYDRNHCHMFSGDASFIDANTVNVRYADGTSDTLQADNIVIATGSRPYRPVNVDFNHERIYDSDTILQLSHEPQHVIIYGAGVIGCEYASIFRGLSVKVDLINTRDRLLAFLDQEMSDALSYHFWNNGVVIRHNEEFEQIEGTTDGVIVHLKSGKKVKADCLLYANGRTGNTSGLGLENIGLEADSRGLLKVNSMYQTALSHVYAVGDVIGYPSLASAAYDQGRIAAQAMIKGEANVHLIEDIPTGIYTIPEISSVGKTEQELTAMKVPYEVGRAQFKHLARAQIVGMDTGSLKILFHRETKQILGIHCFGERAAEIIHIGQAIMEQKGEGNTLEYFVNTTFNYPTMAEAYRVAALNGLNRLF.

FAD is bound at residue 36–45 (ERYNNVGGGC).

This sequence belongs to the class-I pyridine nucleotide-disulfide oxidoreductase family. FAD serves as cofactor.

Its subcellular location is the cytoplasm. The catalysed reaction is NAD(+) + NADPH = NADH + NADP(+). Its function is as follows. Conversion of NADPH, generated by peripheral catabolic pathways, to NADH, which can enter the respiratory chain for energy generation. This Yersinia pseudotuberculosis serotype O:1b (strain IP 31758) protein is Soluble pyridine nucleotide transhydrogenase.